The primary structure comprises 212 residues: Large ribosomal subunit protein uL4 (212 aa).

Belongs to the universal ribosomal protein uL4 family. Part of the 50S ribosomal subunit.

One of the primary rRNA binding proteins, this protein initially binds near the 5'-end of the 23S rRNA. It is important during the early stages of 50S assembly. It makes multiple contacts with different domains of the 23S rRNA in the assembled 50S subunit and ribosome. Its function is as follows. Forms part of the polypeptide exit tunnel. The polypeptide is Large ribosomal subunit protein uL4 (Caulobacter vibrioides (strain ATCC 19089 / CIP 103742 / CB 15) (Caulobacter crescentus)).